We begin with the raw amino-acid sequence, 521 residues long: Interleukin-9 receptor (521 aa).

The first 40 residues, 1-40 (MGLGRCIWEGWTLESEALRRDMGTWLLACICICTCVCLGV), serve as a signal peptide directing secretion. At 41 to 270 (SVTGEGQGPR…GPLIPPWGWP (230 aa)) the chain is on the extracellular side. Asn-117 and Asn-156 each carry an N-linked (GlcNAc...) asparagine glycan. The Fibronectin type-III domain occupies 149-259 (PPSDLQSNIS…QPVCFQAPQR (111 aa)). The short motif at 245-249 (WSEWS) is the WSXWS motif element. Residues 271-291 (GNTLVAVSIFLLLTGPTYLLF) traverse the membrane as a helical segment. Topologically, residues 292-521 (KLSPRVKRIF…VLSKARSWTF (230 aa)) are cytoplasmic. Positions 301-309 (FYQNVPSPA) match the Box 1 motif motif. Residues 413 to 439 (WAPTSLTRPAPPDSEGSRSSSSSSSSN) form a disordered region. A compositionally biased stretch (low complexity) spans 429–439 (SRSSSSSSSSN).

It belongs to the type I cytokine receptor family. Type 4 subfamily. In terms of assembly, interacts with IL9.

It is found in the cell membrane. The protein localises to the secreted. Functionally, plays an important role in the immune response against parasites by acting as a receptor of IL9. This chain is Interleukin-9 receptor (IL9R), found in Homo sapiens (Human).